The sequence spans 438 residues: Mitochondrial distribution and morphology protein 12 (438 aa).

The SMP-LTD domain maps to 1-438 (MSIEVDWAAA…VYPSFWTFLV (438 aa)). Disordered regions lie at residues 110-154 (SFSH…TSTL), 185-277 (SDSG…MRER), and 353-379 (GSEQ…KDKE). The span at 212–226 (DTTNSTSRPSTANTL) shows a compositional bias: polar residues. The span at 227–245 (PSHPSLGHSGSSGSNPHTS) shows a compositional bias: low complexity. The span at 354–364 (SEQSQGSQNPS) shows a compositional bias: polar residues. Residues 365–379 (DDGRPRSGGDQKDKE) show a composition bias toward basic and acidic residues.

Belongs to the MDM12 family. In terms of assembly, component of the ER-mitochondria encounter structure (ERMES) or MDM complex, composed of mmm1, mdm10, mdm12 and mdm34. A mmm1 homodimer associates with one molecule of mdm12 on each side in a pairwise head-to-tail manner, and the SMP-LTD domains of mmm1 and mdm12 generate a continuous hydrophobic tunnel for phospholipid trafficking.

It localises to the mitochondrion outer membrane. It is found in the endoplasmic reticulum membrane. In terms of biological role, component of the ERMES/MDM complex, which serves as a molecular tether to connect the endoplasmic reticulum (ER) and mitochondria. Components of this complex are involved in the control of mitochondrial shape and protein biogenesis, and function in nonvesicular lipid trafficking between the ER and mitochondria. Mdm12 is required for the interaction of the ER-resident membrane protein mmm1 and the outer mitochondrial membrane-resident beta-barrel protein mdm10. The mdm12-mmm1 subcomplex functions in the major beta-barrel assembly pathway that is responsible for biogenesis of all mitochondrial outer membrane beta-barrel proteins, and acts in a late step after the SAM complex. The mdm10-mdm12-mmm1 subcomplex further acts in the TOM40-specific pathway after the action of the mdm12-mmm1 complex. Essential for establishing and maintaining the structure of mitochondria and maintenance of mtDNA nucleoids. This chain is Mitochondrial distribution and morphology protein 12, found in Penicillium rubens (strain ATCC 28089 / DSM 1075 / NRRL 1951 / Wisconsin 54-1255) (Penicillium chrysogenum).